Here is an 87-residue protein sequence, read N- to C-terminus: Large ribosomal subunit protein uL23c (87 aa).

This sequence belongs to the universal ribosomal protein uL23 family. In terms of assembly, part of the 50S ribosomal subunit.

Its subcellular location is the plastid. It localises to the chloroplast. Its function is as follows. Binds to 23S rRNA. The chain is Large ribosomal subunit protein uL23c (rpl23) from Bigelowiella natans (Pedinomonas minutissima).